Consider the following 64-residue polypeptide: Long neurotoxin MS4 (64 aa).

Cystine bridges form between C3–C24, C6–C11, C17–C41, C45–C57, and C58–C63.

The protein belongs to the three-finger toxin family. Ancestral subfamily. Expressed by the venom gland.

It is found in the secreted. Produces peripheral paralysis by blocking neuromuscular transmission at the postsynaptic site. Weak inhibitor of the endogenous nicotinic acetylcholine receptors (nAChR) in the human rhabdomyosarcoma TE 671 cell line with an IC(50) of 690 mM. This neurotoxin is lethal to zebrafish by injection at the back of the dorsolateral region, but is not toxic to mice by intraperitoneal injection. This Micrurus surinamensis (Surinam coral snake) protein is Long neurotoxin MS4.